Here is a 386-residue protein sequence, read N- to C-terminus: Methylthioribose-1-phosphate isomerase (386 aa).

The active-site Proton donor is aspartate 258.

This sequence belongs to the eIF-2B alpha/beta/delta subunits family. MtnA subfamily.

The protein resides in the cytoplasm. Its subcellular location is the nucleus. The catalysed reaction is 5-(methylsulfanyl)-alpha-D-ribose 1-phosphate = 5-(methylsulfanyl)-D-ribulose 1-phosphate. The protein operates within amino-acid biosynthesis; L-methionine biosynthesis via salvage pathway; L-methionine from S-methyl-5-thio-alpha-D-ribose 1-phosphate: step 1/6. Its function is as follows. Catalyzes the interconversion of methylthioribose-1-phosphate (MTR-1-P) into methylthioribulose-1-phosphate (MTRu-1-P). The protein is Methylthioribose-1-phosphate isomerase of Postia placenta (strain ATCC 44394 / Madison 698-R) (Brown rot fungus).